A 467-amino-acid polypeptide reads, in one-letter code: Rhamnulokinase (467 aa).

Ala-11–Arg-15 contributes to the ATP binding site. Substrate-binding positions include Ala-78 and His-235–Thr-237. Asp-236 acts as the Proton acceptor in catalysis. Residue Thr-257 coordinates ATP. Asn-294 serves as a coordination point for substrate. Gln-302 contributes to the ATP binding site. A disulfide bridge links Cys-351 with Cys-368. Gly-400 is an ATP binding site.

The protein belongs to the rhamnulokinase family. Mg(2+) serves as cofactor.

The enzyme catalyses L-rhamnulose + ATP = L-rhamnulose 1-phosphate + ADP + H(+). It participates in carbohydrate degradation; L-rhamnose degradation; glycerone phosphate from L-rhamnose: step 2/3. In terms of biological role, involved in the catabolism of L-rhamnose (6-deoxy-L-mannose). Catalyzes the transfer of the gamma-phosphate group from ATP to the 1-hydroxyl group of L-rhamnulose to yield L-rhamnulose 1-phosphate. The sequence is that of Rhamnulokinase from Halalkalibacterium halodurans (strain ATCC BAA-125 / DSM 18197 / FERM 7344 / JCM 9153 / C-125) (Bacillus halodurans).